A 944-amino-acid chain; its full sequence is Putative alpha,alpha-trehalose-phosphate synthase [UDP-forming] 106 kDa subunit (944 aa).

Over residues 73–84 (TNAQSNIATPSP) the composition is skewed to polar residues. Disordered stretches follow at residues 73–113 (TNAQ…NSLS) and 129–166 (SKND…SELE). Positions 101 to 113 (PSSDSPSLENSLS) are enriched in low complexity. Residues Ser-141, Ser-145, Ser-149, Ser-150, Ser-163, and Ser-177 each carry the phosphoserine modification. Positions 173–652 (SRSLSFSMNG…AVTFQSLIKE (480 aa)) are glycosyltransferase. Phosphothreonine is present on Thr-189.

It in the N-terminal section; belongs to the glycosyltransferase 20 family.

It carries out the reaction D-glucose 6-phosphate + UDP-alpha-D-glucose = alpha,alpha-trehalose 6-phosphate + UDP + H(+). This Schizosaccharomyces pombe (strain 972 / ATCC 24843) (Fission yeast) protein is Putative alpha,alpha-trehalose-phosphate synthase [UDP-forming] 106 kDa subunit.